The following is a 231-amino-acid chain: Large ribosomal subunit protein uL1 (231 aa).

Belongs to the universal ribosomal protein uL1 family. In terms of assembly, part of the 50S ribosomal subunit.

In terms of biological role, binds directly to 23S rRNA. The L1 stalk is quite mobile in the ribosome, and is involved in E site tRNA release. Its function is as follows. Protein L1 is also a translational repressor protein, it controls the translation of the L11 operon by binding to its mRNA. The protein is Large ribosomal subunit protein uL1 of Acinetobacter baumannii (strain AB0057).